A 281-amino-acid chain; its full sequence is Lectin CaBo (281 aa).

The signal sequence occupies residues 1–29; the sequence is MAISKKSSLYLPIFTFITMLLMVVNKVSS. Aspartate 119 is a Ca(2+) binding site. Arginine 139 serves as a coordination point for a carbohydrate. Positions 149–163 are cleaved as a propeptide — removed in mature form; that stretch reads IIKNSTTIDFNAAYN. Positions 171 and 173 each coordinate Mn(2+). 4 residues coordinate Ca(2+): aspartate 173, tyrosine 175, asparagine 177, and aspartate 182. Tyrosine 175 is an a carbohydrate binding site. Mn(2+)-binding residues include aspartate 182 and histidine 187. Residue 262–263 participates in a carbohydrate binding; the sequence is LY.

The protein belongs to the leguminous lectin family. Equilibrium between homodimer and homotetramer. In terms of processing, the mature chain consists of residues 164-281 followed by residues 30-148. Concanavalin A-like lectins of the Diocleinae subtribe undergo proteolytic processing referred to as circular permutation. The propeptide is split into an N-terminal and a C-terminal part, the gamma and beta chain, respectively. These are then religated in beta-gamma order to form the mature alpha chain. The beta and gamma chains can often be detected in cell extracts.

Its function is as follows. D-mannose-specific lectin. The protein is Lectin CaBo of Canavalia bonariensis.